We begin with the raw amino-acid sequence, 395 residues long: Aspergillopepsin-1 (395 aa).

A signal peptide spans 1–20; that stretch reads MVVFSKVTAVVVGLSTIVSA. A propeptide spans 21 to 70 (activation peptide); sequence VPVVQPRKGFTINQVARPVTNKKTVNLPAVYANALTKYGGTVPDSVKAAA. The region spanning 86-392 is the Peptidase A1 domain; that stretch reads YLTPVKVGGT…DSQGPRLGFA (307 aa). Catalysis depends on residues aspartate 102 and aspartate 284. An intrachain disulfide couples cysteine 320 to cysteine 355.

This sequence belongs to the peptidase A1 family. As to quaternary structure, monomer.

It localises to the secreted. It catalyses the reaction Hydrolysis of proteins with broad specificity. Generally favors hydrophobic residues in P1 and P1', but also accepts Lys in P1, which leads to activation of trypsinogen. Does not clot milk.. Its function is as follows. Secreted aspartic endopeptidase that allows assimilation of proteinaceous substrates. The scissile peptide bond is attacked by a nucleophilic water molecule activated by two aspartic residues in the active site. Shows a broad primary substrate specificity. Favors hydrophobic residues at the P1 and P1' positions, but also accepts a lysine residue in the P1 position, leading to the activation of trypsinogen and chymotrypsinogen A. This chain is Aspergillopepsin-1 (pepA), found in Aspergillus fumigatus (strain CBS 144.89 / FGSC A1163 / CEA10) (Neosartorya fumigata).